Reading from the N-terminus, the 266-residue chain is ATP synthase subunit a (266 aa).

The next 6 membrane-spanning stretches (helical) occupy residues 38–58 (KQMLLVILSVVIIATFFLLAA), 99–119 (LLFSLFFFILVNNIYGAIPLI), 126–146 (HVGGAYVLAAIVYLTWIAIGV), 162–182 (GVPVYILPIVIPIEIISNFLV), 191–211 (LFATMLAGHLIVMIAGSGIEY), and 224–244 (SVLVLVGAIAMYMLEALIMAL).

The protein belongs to the ATPase A chain family. In terms of assembly, F-type ATPases have 2 components, CF(1) - the catalytic core - and CF(0) - the membrane proton channel. CF(1) has five subunits: alpha(3), beta(3), gamma(1), delta(1), epsilon(1). CF(0) has three main subunits: a(1), b(2) and c(9-12). The alpha and beta chains form an alternating ring which encloses part of the gamma chain. CF(1) is attached to CF(0) by a central stalk formed by the gamma and epsilon chains, while a peripheral stalk is formed by the delta and b chains.

It localises to the cell membrane. Functionally, key component of the proton channel; it plays a direct role in the translocation of protons across the membrane. This Arthrobacter sp. (strain FB24) protein is ATP synthase subunit a.